The sequence spans 98 residues: Small proline-rich protein 2B (98 aa).

5 repeat units span residues 21 to 29 (PKCPEPCPP), 30 to 38 (PKCPEPCPP), 39 to 47 (PVCCEPCPP), 48 to 56 (PKCPEPCPP), and 57 to 65 (PVCCEPCPP). Residues 21-65 (PKCPEPCPPPKCPEPCPPPVCCEPCPPPKCPEPCPPPVCCEPCPP) are 5 X 9 AA approximate tandem repeats.

This sequence belongs to the cornifin (SPRR) family. In terms of tissue distribution, expressed in uterus.

It localises to the cytoplasm. Its function is as follows. Cross-linked envelope protein of keratinocytes. It is a keratinocyte protein that first appears in the cell cytosol, but ultimately becomes cross-linked to membrane proteins by transglutaminase. All that results in the formation of an insoluble envelope beneath the plasma membrane. In Mus musculus (Mouse), this protein is Small proline-rich protein 2B (Sprr2b).